Consider the following 81-residue polypeptide: Photosystem I iron-sulfur center (81 aa).

4Fe-4S ferredoxin-type domains follow at residues 2 to 31 (SHSV…MIPW) and 39 to 68 (IASA…VRVY). [4Fe-4S] cluster-binding residues include Cys11, Cys14, Cys17, Cys21, Cys48, Cys51, Cys54, and Cys58.

In terms of assembly, the eukaryotic PSI reaction center is composed of at least 11 subunits. Requires [4Fe-4S] cluster as cofactor.

It is found in the plastid thylakoid membrane. The catalysed reaction is reduced [plastocyanin] + hnu + oxidized [2Fe-2S]-[ferredoxin] = oxidized [plastocyanin] + reduced [2Fe-2S]-[ferredoxin]. Its function is as follows. Apoprotein for the two 4Fe-4S centers FA and FB of photosystem I (PSI); essential for photochemical activity. FB is the terminal electron acceptor of PSI, donating electrons to ferredoxin. The C-terminus interacts with PsaA/B/D and helps assemble the protein into the PSI complex. Required for binding of PsaD and PsaE to PSI. PSI is a plastocyanin-ferredoxin oxidoreductase, converting photonic excitation into a charge separation, which transfers an electron from the donor P700 chlorophyll pair to the spectroscopically characterized acceptors A0, A1, FX, FA and FB in turn. The chain is Photosystem I iron-sulfur center from Cuscuta gronovii (Common dodder).